Here is a 347-residue protein sequence, read N- to C-terminus: NADH-ubiquinone oxidoreductase chain 2 (347 aa).

A run of 11 helical transmembrane segments spans residues 3–23, 25–45, 59–79, 96–116, 122–142, 153–173, 178–198, 200–220, 237–257, 274–294, and 325–345; these read PPIL…VLTS, HWML…PILM, YFLM…INLL, TLMT…FWVP, ISLS…LSVL, LLLL…LNQT, ILAY…IYNP, MMLL…MLFM, MPLI…LPPL, EMII…YFYM, and FLPP…IISI.

It belongs to the complex I subunit 2 family. As to quaternary structure, core subunit of respiratory chain NADH dehydrogenase (Complex I) which is composed of 45 different subunits. Interacts with TMEM242.

It is found in the mitochondrion inner membrane. It catalyses the reaction a ubiquinone + NADH + 5 H(+)(in) = a ubiquinol + NAD(+) + 4 H(+)(out). In terms of biological role, core subunit of the mitochondrial membrane respiratory chain NADH dehydrogenase (Complex I) which catalyzes electron transfer from NADH through the respiratory chain, using ubiquinone as an electron acceptor. Essential for the catalytic activity and assembly of complex I. This is NADH-ubiquinone oxidoreductase chain 2 from Paradoxurus hermaphroditus (Asian palm civet).